Reading from the N-terminus, the 644-residue chain is 1-deoxy-D-xylulose-5-phosphate synthase (644 aa).

Residues His-78 and 120 to 122 (GHA) each bind thiamine diphosphate. Residue Asp-149 participates in Mg(2+) binding. Thiamine diphosphate is bound by residues 150 to 151 (AA), Asn-178, and Glu-373. Residue Asn-178 coordinates Mg(2+).

The protein belongs to the transketolase family. DXPS subfamily. Homodimer. Mg(2+) is required as a cofactor. The cofactor is thiamine diphosphate.

The catalysed reaction is D-glyceraldehyde 3-phosphate + pyruvate + H(+) = 1-deoxy-D-xylulose 5-phosphate + CO2. It participates in metabolic intermediate biosynthesis; 1-deoxy-D-xylulose 5-phosphate biosynthesis; 1-deoxy-D-xylulose 5-phosphate from D-glyceraldehyde 3-phosphate and pyruvate: step 1/1. Functionally, catalyzes the acyloin condensation reaction between C atoms 2 and 3 of pyruvate and glyceraldehyde 3-phosphate to yield 1-deoxy-D-xylulose-5-phosphate (DXP). This Chlamydia caviae (strain ATCC VR-813 / DSM 19441 / 03DC25 / GPIC) (Chlamydophila caviae) protein is 1-deoxy-D-xylulose-5-phosphate synthase.